A 146-amino-acid polypeptide reads, in one-letter code: MKKVQVKVIREEGVELPKYETEGSAGMDVRANIKESITLKSLERILVPTGLKVAIPEGYEIQVRPRSGLAIKHGITMLNTPGTVDSDYRGELKVIVVNLSNEAYTIEPNERIGQFVLNKIEQIEFVEVEELDSTERGESGFGHTGK.

Substrate contacts are provided by residues 66–68 (RSG), Asn-79, 83–85 (TVD), and Lys-93.

The protein belongs to the dUTPase family. Requires Mg(2+) as cofactor.

The catalysed reaction is dUTP + H2O = dUMP + diphosphate + H(+). It participates in pyrimidine metabolism; dUMP biosynthesis; dUMP from dCTP (dUTP route): step 2/2. This enzyme is involved in nucleotide metabolism: it produces dUMP, the immediate precursor of thymidine nucleotides and it decreases the intracellular concentration of dUTP so that uracil cannot be incorporated into DNA. This Fusobacterium nucleatum subsp. nucleatum (strain ATCC 25586 / DSM 15643 / BCRC 10681 / CIP 101130 / JCM 8532 / KCTC 2640 / LMG 13131 / VPI 4355) protein is Deoxyuridine 5'-triphosphate nucleotidohydrolase.